Reading from the N-terminus, the 368-residue chain is MTVKLTIDCMGGDHGPSVTVPAAVKFVRSHPDAHLMLVGIESAIRAQLKKCKALDEPALSVVPAAEVVAMDDPVEVALRKKKDSSMRVALNHVKEGEAQACISAGNTGALMAVSRYVLKTLPGIERPAIAFALPNPTGYTMMLDLGANVDCEPQHLLQFAEMGHALVAALEGKERPTIGLLNIGEEVIKGNETIKRAGELLRASTLNFRGNVEGNDIYKGTVDVIVCDGFVGNVALKTSEGLAQMLADIIKEEFSRSLLSKLMALLALPVLLRFKKRVDHRQYNGAALLGLRSLVIKSHGSADAYAFEWAIKRGYDAVKNGVLERLSRAMAENAAPLGESGRDADGAGQASPSAGQPAEPSAALSSKT.

The segment at 334–368 is disordered; the sequence is AAPLGESGRDADGAGQASPSAGQPAEPSAALSSKT.

This sequence belongs to the PlsX family. In terms of assembly, homodimer. Probably interacts with PlsY.

The protein localises to the cytoplasm. It carries out the reaction a fatty acyl-[ACP] + phosphate = an acyl phosphate + holo-[ACP]. The protein operates within lipid metabolism; phospholipid metabolism. Functionally, catalyzes the reversible formation of acyl-phosphate (acyl-PO(4)) from acyl-[acyl-carrier-protein] (acyl-ACP). This enzyme utilizes acyl-ACP as fatty acyl donor, but not acyl-CoA. The protein is Phosphate acyltransferase of Burkholderia thailandensis (strain ATCC 700388 / DSM 13276 / CCUG 48851 / CIP 106301 / E264).